A 246-amino-acid polypeptide reads, in one-letter code: MTTGDCCHLPGSLCDCSGSPAFSKVVEATGLGPPQYVAQVTSRDGRLLSTVIRALDTPSDGPFCRICHEGANGECLLSPCGCTGTLGAVHKSCLEKWLSSSNTSYCELCHTEFAVEKRPRPLTEWLKDPGPRTEKRTLCCDMVCFLFITPLAAISGWLCLRGAQDHLRLHSQLEAVGLIALTIALFTIYVLWTLVSFRYHCQLYSEWRKTNQKVRLKIREADSPEGPQHSPLAAGLLKKVAEETPV.

The RING-CH-type zinc finger occupies 56-116 (DTPSDGPFCR…ELCHTEFAVE (61 aa)). The required for inhibition of HIV-1 virus production and VSV G protein expression stretch occupies residues 56–116 (DTPSDGPFCR…ELCHTEFAVE (61 aa)). Zn(2+) contacts are provided by Cys-64, Cys-67, Cys-80, Cys-82, His-90, Cys-93, Cys-106, and Cys-109. Positions 121–246 (PLTEWLKDPG…LKKVAEETPV (126 aa)) are required for interaction with IKBKG. 2 helical membrane-spanning segments follow: residues 138–158 (LCCD…SGWL) and 175–195 (AVGL…WTLV).

In terms of assembly, interacts with STX6; the interaction promotes MARCHF2-mediated ubiquitination and degradation of CFTR. Interacts with MARCHF3. Interacts with GOPC/CAL; the interaction leads to CFTR ubiquitination and degradation. Interacts with CFTR; the interaction leads to CFTR ubiqtuitination and degradation. Interacts (via PDZ domain) with DLG1 (via PDZ domains); the interaction leads to DLG1 ubiqtuitination and degradation. Interacts with ERGIC3. Interacts with ADRB2. Interacts with IKBKG/NEMO; during the late stages of macrophage viral and bacterial infection; the interaction leads to ubiquitination and degradation of IKBKG/NEMO. In terms of tissue distribution, broadly expressed.

The protein resides in the endoplasmic reticulum membrane. It localises to the lysosome membrane. It is found in the endosome membrane. Its subcellular location is the golgi apparatus membrane. The protein localises to the cytoplasm. The protein resides in the cell membrane. The catalysed reaction is S-ubiquitinyl-[E2 ubiquitin-conjugating enzyme]-L-cysteine + [acceptor protein]-L-lysine = [E2 ubiquitin-conjugating enzyme]-L-cysteine + N(6)-ubiquitinyl-[acceptor protein]-L-lysine.. Its pathway is protein modification; protein ubiquitination. Functionally, E3 ubiquitin-protein ligase that may mediate ubiquitination of TFRC and CD86, and promote their subsequent endocytosis and sorting to lysosomes via multivesicular bodies. E3 ubiquitin ligases accept ubiquitin from an E2 ubiquitin-conjugating enzyme in the form of a thioester and then directly transfer the ubiquitin to targeted substrates. Together with GOPC/CAL mediates the ubiquitination and lysosomal degradation of CFTR. Ubiquitinates and therefore mediates the degradation of DLG1. Regulates the intracellular trafficking and secretion of alpha1-antitrypsin/SERPINA1 and HP/haptoglobin via ubiquitination and degradation of the cargo receptor ERGIC3. Negatively regulates the antiviral and antibacterial immune response by repression of the NF-kB and type 1 IFN signaling pathways, via MARCHF2-mediated K48-linked polyubiquitination of IKBKG/NEMO, resulting in its proteasomal degradation. May be involved in endosomal trafficking through interaction with STX6. Its function is as follows. (Microbial infection) Positively regulates the degradation of Vesicular stomatitis virus (VSV) G protein via the lysosomal degradation pathway. Represses HIV-1 viral production and may inhibit the translocation of HIV-1 env to the cell surface, resulting in decreased viral cell-cell transmission. The polypeptide is E3 ubiquitin-protein ligase MARCHF2 (Homo sapiens (Human)).